The chain runs to 261 residues: Putative hydro-lyase SH0274 (261 aa).

It belongs to the D-glutamate cyclase family.

The chain is Putative hydro-lyase SH0274 from Staphylococcus haemolyticus (strain JCSC1435).